The following is a 343-amino-acid chain: GTPase Obg (343 aa).

Residues 1 to 159 (MKFLDQAKVY…LNIWLRLKLI (159 aa)) enclose the Obg domain. Positions 160 to 327 (ADAGLVGLPN…VLRALMTVIA (168 aa)) constitute an OBG-type G domain. GTP contacts are provided by residues 166–173 (GLPNAGKS), 191–195 (FTTLH), 212–215 (DIPG), 279–282 (SQVD), and 308–310 (SAV). Residues S173 and T193 each contribute to the Mg(2+) site.

It belongs to the TRAFAC class OBG-HflX-like GTPase superfamily. OBG GTPase family. In terms of assembly, monomer. Mg(2+) serves as cofactor.

The protein localises to the cytoplasm. Functionally, an essential GTPase which binds GTP, GDP and possibly (p)ppGpp with moderate affinity, with high nucleotide exchange rates and a fairly low GTP hydrolysis rate. Plays a role in control of the cell cycle, stress response, ribosome biogenesis and in those bacteria that undergo differentiation, in morphogenesis control. This is GTPase Obg from Mesorhizobium japonicum (strain LMG 29417 / CECT 9101 / MAFF 303099) (Mesorhizobium loti (strain MAFF 303099)).